A 64-amino-acid polypeptide reads, in one-letter code: Large ribosomal subunit protein bL35 (64 aa).

Disordered stretches follow at residues 1-20 (MPKA…TGTG) and 37-64 (PTKR…MLNG).

It belongs to the bacterial ribosomal protein bL35 family.

In Mycobacterium sp. (strain JLS), this protein is Large ribosomal subunit protein bL35.